We begin with the raw amino-acid sequence, 623 residues long: NAD-dependent malic enzyme 1, mitochondrial (623 aa).

The N-terminal 38 residues, 1–38 (MGIANKLRLSSSSLSRILHRRILYSSAVRSFTTSEGHR), are a transit peptide targeting the mitochondrion. Tyr-143 serves as the catalytic Proton donor. Residue Arg-196 coordinates NAD(+). Catalysis depends on Lys-214, which acts as the Proton acceptor. The a divalent metal cation site is built by Glu-285, Asp-286, and Asp-309. Residues Asp-309 and Asn-464 each coordinate NAD(+).

This sequence belongs to the malic enzymes family. As to quaternary structure, homodimer. Heterodimer of two related subunits in NAD-MEH complex. Interacts with NAD-ME2. Mg(2+) is required as a cofactor. The cofactor is Mn(2+). Expressed in leaves, stems, flowers, and roots (at protein level).

It localises to the mitochondrion. It carries out the reaction (S)-malate + NAD(+) = pyruvate + CO2 + NADH. Its activity is regulated as follows. Activated by oxaloacetate (OAA), 2-ketoglutarate, succinate and fumarate as homodimer and by OAA, 2-ketoglutarate, succinate, fumarate and coenzyme A (acetyl-CoA and CoA) as heterodimer NAD-MEH. Functionally, involved in the regulation of sugars and amino acids metabolisms during the night period. The chain is NAD-dependent malic enzyme 1, mitochondrial (NAD-ME1) from Arabidopsis thaliana (Mouse-ear cress).